A 151-amino-acid chain; its full sequence is 3-hydroxyacyl-[acyl-carrier-protein] dehydratase FabZ (151 aa).

Residue His49 is part of the active site.

It belongs to the thioester dehydratase family. FabZ subfamily.

It localises to the cytoplasm. It carries out the reaction a (3R)-hydroxyacyl-[ACP] = a (2E)-enoyl-[ACP] + H2O. Its function is as follows. Involved in unsaturated fatty acids biosynthesis. Catalyzes the dehydration of short chain beta-hydroxyacyl-ACPs and long chain saturated and unsaturated beta-hydroxyacyl-ACPs. The sequence is that of 3-hydroxyacyl-[acyl-carrier-protein] dehydratase FabZ from Bordetella parapertussis (strain 12822 / ATCC BAA-587 / NCTC 13253).